We begin with the raw amino-acid sequence, 301 residues long: Heterogeneous nuclear ribonucleoprotein D-like (301 aa).

RRM domains lie at 29–111 (GKMF…KGKE) and 114–193 (KKVF…QPKE). Lysine 42 carries the post-translational modification N6-methyllysine. Residue lysine 90 forms a Glycyl lysine isopeptide (Lys-Gly) (interchain with G-Cter in SUMO2) linkage. Lysine 97 carries the N6-acetyllysine modification. Residue serine 122 is modified to Phosphoserine. Disordered regions lie at residues 194–229 (VYRQ…NWNQ) and 279–301 (GQQS…YQPY). Positions 204-223 (GGRGAAAGGRGGARGRGRGQ) are enriched in gly residues. The interval 223–301 (QGQNWNQGFN…GNHQNNYQPY (79 aa)) is necessary for interaction with TNPO1. Arginine 289 carries the dimethylated arginine; alternate modification. Arginine 289 is subject to Omega-N-methylarginine; alternate.

Interacts with TNPO1. Interacts with ZNF148. In terms of processing, dimethylation of Arg-289 is probably of the asymmetric type. Expressed in skeletal muscle, myoblast, myotube, heart, brain, liver, kidney, heart, lung, stomach, small intestine, large intestine, spleen, and testis (at protein level). Expressed in brain, skeletal muscle, heart, lung, liver, stomach, small intestine, large intestine, kidney, spleen and testis.

The protein resides in the nucleus. Its subcellular location is the cytoplasm. Acts as a transcriptional regulator. Promotes transcription repression. Promotes transcription activation in differentiated myotubes. Binds to double- and single-stranded DNA sequences. Binds to the transcription suppressor CATR sequence of the COX5B promoter. Binds with high affinity to RNA molecules that contain AU-rich elements (AREs) found within the 3'-UTR of many proto-oncogenes and cytokine mRNAs. Binds both to nuclear and cytoplasmic poly(A) mRNAs. Binds to poly(G) and poly(A), but not to poly(U) or poly(C) RNA homopolymers. Binds to the 5'-ACUAGC-3' RNA consensus sequence. In Mus musculus (Mouse), this protein is Heterogeneous nuclear ribonucleoprotein D-like (Hnrnpdl).